The sequence spans 784 residues: Transcription factor kayak (784 aa).

Low complexity-rich tracts occupy residues 97-106, 115-126, and 198-227; these read QPTQSAYQQQ, NNNNNSNNNANM, and QQQQQSQQQQQSQQQQQSQQQQQSQQQQQQ. 4 disordered regions span residues 97-126, 196-231, 358-404, and 421-464; these read QPTQSAYQQQNAKQSYGHNNNNNSNNNANM, YNQQQQQSQQQQQSQQQQQSQQQQQSQQQQQQHLPT, PGSD…GNGS, and SGRG…KRRI. Over residues 365 to 378 the composition is skewed to polar residues; it reads SNGSWNEGQLNDDQ. The span at 380–397 shows a compositional bias: low complexity; sequence TTDTSSAATDSTSYQNGG. Residues 421–438 show a composition bias toward polar residues; the sequence is SGRGSGLAANSTTSNSAT. A bZIP domain is found at 459-522; sequence EEKRRIRRER…SQLEYVLQTH (64 aa). Positions 461–463 are basic motif; that stretch reads KRR. The interval 464 to 471 is leucine-zipper; the sequence is IRRERNKL. Serine 594 is subject to Phosphoserine. Disordered regions lie at residues 616 to 635 and 759 to 784; these read QDGAIDSGSSLDQDGPTPAK and PTCSSQNKHPLELPTPTSEPSKLVSL.

The protein belongs to the bZIP family. Fos subfamily. In terms of assembly, homodimer. Heterodimer with Jra. The kay-Jra heterodimer binds more stably to the AP-1 site than either of the two proteins alone.

It is found in the nucleus. Developmentally regulated transcription factor AP-1 binds and recognizes the enhancer DNA sequence: 5'-TGA[CG]TCA-3'. May play a role in the function or determination of a particular subset of cells in the developing embryo. It is able to carry out its function either independently of or in conjunction with Jra. This is Transcription factor kayak from Drosophila mojavensis (Fruit fly).